The following is a 619-amino-acid chain: Zinc finger CCCH domain-containing protein 67 (619 aa).

2 ANK repeats span residues Glu-52–Pro-81 and Ser-88–Leu-120. 2 C3H1-type zinc fingers span residues His-213–Phe-241 and Gln-249–Asp-273. Positions Ser-308–Gln-341 are disordered. Gly residues predominate over residues Ala-322–Ala-337.

The chain is Zinc finger CCCH domain-containing protein 67 from Oryza sativa subsp. japonica (Rice).